A 509-amino-acid chain; its full sequence is H/ACA ribonucleoprotein complex subunit DKC1 (509 aa).

The disordered stretch occupies residues 1–24; sequence MADAEVITFPKKHKKKKDRKPLQE. Ala-2 carries the post-translational modification N-acetylalanine. The segment at 2–21 is nucleolar localization; sequence ADAEVITFPKKHKKKKDRKP. The span at 10–19 shows a compositional bias: basic residues; the sequence is PKKHKKKKDR. Residues Lys-20, Lys-39, and Lys-43 each participate in a glycyl lysine isopeptide (Lys-Gly) (interchain with G-Cter in SUMO2) cross-link. The active-site Nucleophile is Asp-125. A Glycyl lysine isopeptide (Lys-Gly) (interchain with G-Cter in SUMO2) cross-link involves residue Lys-191. The PUA domain occupies 297-372; the sequence is KRLVMKDSAV…VAKIKRVIME (76 aa). Ser-387 is modified (phosphoserine). A Glycyl lysine isopeptide (Lys-Gly) (interchain with G-Cter in SUMO2) cross-link involves residue Lys-394. A Glycyl lysine isopeptide (Lys-Gly) (interchain with G-Cter in SUMO1); alternate cross-link involves residue Lys-413. Lys-413 is covalently cross-linked (Glycyl lysine isopeptide (Lys-Gly) (interchain with G-Cter in SUMO2); alternate). A Glycyl lysine isopeptide (Lys-Gly) (interchain with G-Cter in SUMO2) cross-link involves residue Lys-424. Residues 446–509 are nuclear and nucleolar localization; the sequence is KRKRDSESES…KVKVVEEMSE (64 aa). The tract at residues 447 to 509 is disordered; sequence RKRDSESESD…KVKVVEEMSE (63 aa). Phosphoserine is present on residues Ser-451, Ser-453, and Ser-455. The residue at position 458 (Thr-458) is a Phosphothreonine. Basic residues predominate over residues 466-476; the sequence is EKKKKKDKKPK. The residue at position 481 (Ser-481) is a Phosphoserine. A Phosphothreonine modification is found at Thr-485. The residue at position 508 (Ser-508) is a Phosphoserine.

This sequence belongs to the pseudouridine synthase TruB family. In terms of assembly, part of the H/ACA small nucleolar ribonucleoprotein (H/ACA snoRNP) complex, which contains NHP2/NOLA2, GAR1/NOLA1, NOP10/NOLA3, and DKC1/NOLA4, which is presumed to be the catalytic subunit. The complex contains a stable core formed by binding of one or two NOP10-DKC1 heterodimers to NHP2; GAR1 subsequently binds to this core via DKC1. The complex binds a box H/ACA small nucleolar RNA (snoRNA), which may target the specific site of modification within the RNA substrate. During assembly, the complex contains NAF1 instead of GAR1/NOLA1. The complex also interacts with TERC, which contains a 3'-terminal domain related to the box H/ACA snoRNAs. Specific interactions with snoRNAs or TERC are mediated by GAR1 and NHP2. Associates with NOLC1/NOPP140. H/ACA snoRNPs interact with the SMN complex, consisting of SMN1 or SMN2, GEMIN2/SIP1, DDX20/GEMIN3, and GEMIN4. This is mediated by interaction between GAR1 and SMN1 or SMN2. The SMN complex may be required for correct assembly of the H/ACA snoRNP complex. Component of the telomerase holoenzyme complex composed of one molecule of TERT, one molecule of WRAP53/TCAB1, two molecules of H/ACA ribonucleoprotein complex subunits DKC1, NOP10, NHP2 and GAR1, and a telomerase RNA template component (TERC). The telomerase holoenzyme complex is associated with TEP1, SMG6/EST1A and POT1. Interacts with SHQ1; this interaction may lead to the stabilization of DKC1, from the time of its synthesis until its association with NOP10, NHP2, and NAF1 at the nascent H/ACA RNA. Interacts with HMBOX1. Interacts with DHX36. In terms of tissue distribution, ubiquitously expressed, with elevated levels in Purkinje cells, the olfactory bulb, and Leydig cells of the testis.

It is found in the nucleus. Its subcellular location is the nucleolus. The protein localises to the cajal body. It catalyses the reaction uridine in 5S rRNA = pseudouridine in 5S rRNA. Functionally, catalytic subunit of H/ACA small nucleolar ribonucleoprotein (H/ACA snoRNP) complex, which catalyzes pseudouridylation of rRNA. This involves the isomerization of uridine such that the ribose is subsequently attached to C5, instead of the normal N1. Each rRNA can contain up to 100 pseudouridine ('psi') residues, which may serve to stabilize the conformation of rRNAs. Required for ribosome biogenesis and telomere maintenance. Also required for correct processing or intranuclear trafficking of TERC, the RNA component of the telomerase reverse transcriptase (TERT) holoenzyme. This is H/ACA ribonucleoprotein complex subunit DKC1 (Dkc1) from Mus musculus (Mouse).